Reading from the N-terminus, the 468-residue chain is MVKRSSHRQVVLDEDDEENYNNNLDDEKMEVLLIPQSNSTTFASSDATQMYKKSRISSNSENKKQIPDTKTLLETFQKIKKTLECPICTEALQRPFTTHCGHTYCYECLLNWLKESKSCPTCRQKLYTQPSPAYLVYEIMNVVAASNSGFPLVGINENPAKKQKEVLFDGMFKQEDSHYPRSILVDSEDGVLRCARCQWELENPYHCDHCGFQISDDQDSGREWFWDGENAESDSSLNGDNTRGGNISTNRAFNNMGHAPITAVPQDWLRFDEGEEFVGSDLESDFSGPGEYDVDDGFIDNRATSQLSPVESDDDFVAPVNGSNGNGITALDSTDSEEIDIMNGFDEERDSGGTNMVSRSETCYNDGQRYDELRRELADIQNESLDSLNSSSNNSPSHNNIHSRQHPFSSDEDEGNIVTNGTGLRSSQSSSQNRGFDLEPYSEVFTASYPRRQARRTRTIQLDSDEES.

The segment at 1–22 is disordered; it reads MVKRSSHRQVVLDEDDEENYNN. An RING-type zinc finger spans residues 85–123; the sequence is CPICTEALQRPFTTHCGHTYCYECLLNWLKESKSCPTCR. Positions 386–402 are enriched in low complexity; it reads DSLNSSSNNSPSHNNIH. Residues 386 to 468 are disordered; sequence DSLNSSSNNS…TIQLDSDEES (83 aa). Positions 417–434 are enriched in polar residues; it reads IVTNGTGLRSSQSSSQNR.

It localises to the nucleus. This is an uncharacterized protein from Schizosaccharomyces pombe (strain 972 / ATCC 24843) (Fission yeast).